The primary structure comprises 265 residues: Hydroxyethylthiazole kinase 2 (265 aa).

A substrate-binding site is contributed by Met-39. Lys-115 and Thr-168 together coordinate ATP. Gly-195 lines the substrate pocket.

Belongs to the Thz kinase family. Mg(2+) is required as a cofactor.

The catalysed reaction is 5-(2-hydroxyethyl)-4-methylthiazole + ATP = 4-methyl-5-(2-phosphooxyethyl)-thiazole + ADP + H(+). It participates in cofactor biosynthesis; thiamine diphosphate biosynthesis; 4-methyl-5-(2-phosphoethyl)-thiazole from 5-(2-hydroxyethyl)-4-methylthiazole: step 1/1. Its function is as follows. Catalyzes the phosphorylation of the hydroxyl group of 4-methyl-5-beta-hydroxyethylthiazole (THZ). This chain is Hydroxyethylthiazole kinase 2, found in Clostridium botulinum (strain Kyoto / Type A2).